Here is a 506-residue protein sequence, read N- to C-terminus: Hippocampus abundant transcript-like protein 1 (506 aa).

The interval 1 to 25 (MSVEPPPELEEKAASEPEAGAMPEK) is disordered. The Extracellular portion of the chain corresponds to 1-49 (MSVEPPPELEEKAASEPEAGAMPEKRAGAQAAGSTWLQGFGRPSVYHAA). The chain crosses the membrane as a helical span at residues 50-70 (IVIFLEFFAWGLLTTPMLTVL). Over 71–82 (HETFSQHTFLMN) the chain is Cytoplasmic. A helical membrane pass occupies residues 83–103 (GLIQGVKGLLSFLSAPLIGAL). Residues 104–111 (SDVWGRKP) lie on the Extracellular side of the membrane. Residues 112 to 132 (FLLGTVFFTCFPIPLMRISPW) traverse the membrane as a helical segment. Topologically, residues 133–134 (WY) are cytoplasmic. Residues 135-155 (FAMISVSGVFSVTFSVIFAYV) traverse the membrane as a helical segment. Residues 156-168 (ADVTQEHERSTAY) lie on the Extracellular side of the membrane. A helical membrane pass occupies residues 169-189 (GWVSATFAASLVSSPAIGAYL). Residues 190 to 196 (SASYGDS) are Cytoplasmic-facing. The helical transmembrane segment at 197-217 (LVVLVATVVALLDICFILVAV) threads the bilayer. Topologically, residues 218 to 255 (PESLPEKMRPVSWGAQISWKQADPFASLKKVGKDSTVL) are extracellular. The chain crosses the membrane as a helical span at residues 256-276 (LICITVFLSYLPEAGQYSSFF). At 277 to 281 (LYLRQ) the chain is on the cytoplasmic side. The helical transmembrane segment at 282–302 (VIGFGSVKIAAFIAMVGILSI) threads the bilayer. At 303-319 (VAQTAFLSILMRSLGNK) the chain is on the extracellular side. The helical transmembrane segment at 320 to 340 (NTVLLGLGFQMLQLAWYGFGS) threads the bilayer. Gln-341 is a topological domain (cytoplasmic). Residues 342–362 (AWMMWAAGTVAAMSSITFPAI) traverse the membrane as a helical segment. At 363–387 (SALVSRNAESDQQGVAQGIITGIRG) the chain is on the extracellular side. The helical transmembrane segment at 388 to 408 (LCNGLGPALYGFIFYMFHVEL) threads the bilayer. Residues 409-428 (TELGPKLNSNNVPLQGAVIP) are Cytoplasmic-facing. The chain crosses the membrane as a helical span at residues 429-449 (GPPFLFGACIVLMSFLVALFI). The Extracellular portion of the chain corresponds to 450-506 (PEYSKASGVQKHSNSSSGSLTNTPERGSDEDIEPLLQDSSIWELSSFEEPGNQCTEL). The interval 457–481 (GVQKHSNSSSGSLTNTPERGSDEDI) is disordered. Residues 459–474 (QKHSNSSSGSLTNTPE) show a composition bias toward polar residues. The N-linked (GlcNAc...) asparagine glycan is linked to Asn-463.

The protein belongs to the major facilitator superfamily.

It localises to the membrane. This Homo sapiens (Human) protein is Hippocampus abundant transcript-like protein 1.